We begin with the raw amino-acid sequence, 376 residues long: UDP-N-acetylglucosamine--N-acetylmuramyl-(pentapeptide) pyrophosphoryl-undecaprenol N-acetylglucosamine transferase (376 aa).

Residues 12–14 (TAG), asparagine 126, arginine 163, serine 198, and glutamine 296 each bind UDP-N-acetyl-alpha-D-glucosamine.

The protein belongs to the glycosyltransferase 28 family. MurG subfamily.

The protein localises to the cell membrane. The enzyme catalyses di-trans,octa-cis-undecaprenyl diphospho-N-acetyl-alpha-D-muramoyl-L-alanyl-D-glutamyl-meso-2,6-diaminopimeloyl-D-alanyl-D-alanine + UDP-N-acetyl-alpha-D-glucosamine = di-trans,octa-cis-undecaprenyl diphospho-[N-acetyl-alpha-D-glucosaminyl-(1-&gt;4)]-N-acetyl-alpha-D-muramoyl-L-alanyl-D-glutamyl-meso-2,6-diaminopimeloyl-D-alanyl-D-alanine + UDP + H(+). The protein operates within cell wall biogenesis; peptidoglycan biosynthesis. Functionally, cell wall formation. Catalyzes the transfer of a GlcNAc subunit on undecaprenyl-pyrophosphoryl-MurNAc-pentapeptide (lipid intermediate I) to form undecaprenyl-pyrophosphoryl-MurNAc-(pentapeptide)GlcNAc (lipid intermediate II). This Frankia casuarinae (strain DSM 45818 / CECT 9043 / HFP020203 / CcI3) protein is UDP-N-acetylglucosamine--N-acetylmuramyl-(pentapeptide) pyrophosphoryl-undecaprenol N-acetylglucosamine transferase.